A 282-amino-acid polypeptide reads, in one-letter code: Glucuronoxylan 4-O-methyltransferase 1 (282 aa).

The helical transmembrane segment at 13-33 (VLLVFLLATLILIFIVRSTLT) threads the bilayer.

Belongs to the methyltransferase superfamily. As to expression, expressed in rosette leaves, stems, flowers and siliques.

It is found in the golgi apparatus membrane. It catalyses the reaction glucuronoxylan D-glucuronate + n S-adenosyl-L-methionine = glucuronoxylan 4-O-methyl-D-glucuronate + n S-adenosyl-L-homocysteine + n H(+). Functionally, methyltransferase catalyzing 4-O-methylation of glucuronic acid side chains on xylan. The sequence is that of Glucuronoxylan 4-O-methyltransferase 1 (GXM1) from Arabidopsis thaliana (Mouse-ear cress).